The primary structure comprises 228 residues: MRSRRVDVMDVMNRLILAMDLMNRDDALRVTGEVREYIDTVKIGYPLVLSEGMDIIAEFRKRFGCRIIADFKVADIPETNEKICRATFKAGADAIIVHGFRGADSVRACLNVAEEMGREVFLLTEMSHPGAEMFIQGAADEIARMGVDLGVKNYVGPSTRPERLSRLREIIGQDSFLISPGVGAQGGDPGETLRFADAIIVGRSIYLADNPAAAAAGIIESIKDLLNP.

Residues Asp20, Lys42, 70 to 79 (DFKVADIPET), Ser127, 180 to 190 (PGVGAQGGDPG), Gly202, and Arg203 each bind substrate. The Proton donor role is filled by Lys72.

Belongs to the OMP decarboxylase family. Type 1 subfamily. Homodimer.

The catalysed reaction is orotidine 5'-phosphate + H(+) = UMP + CO2. Its pathway is pyrimidine metabolism; UMP biosynthesis via de novo pathway; UMP from orotate: step 2/2. Functionally, catalyzes the decarboxylation of orotidine 5'-monophosphate (OMP) to uridine 5'-monophosphate (UMP). This is Orotidine 5'-phosphate decarboxylase (pyrF) from Methanothermobacter thermautotrophicus (strain ATCC 29096 / DSM 1053 / JCM 10044 / NBRC 100330 / Delta H) (Methanobacterium thermoautotrophicum).